The sequence spans 201 residues: MALHDENVVWHSHPVTVAAREQLHGHRGVVLWFTGLSGSGKSTVAGALEEALHQRGVSTYLLDGDNVRHGLCRDLGFSDADRQENIRRVGEVASLMADAGLIVLTAFISPHRAERQLVKERVGHDRFIEIYVNTPLAICEQRDPKGLYKKARAGELRNFTGIDAIYEAPDSPQVHLNGEQLVTNLVSQLLDLLRRRDIIRS.

Residue 35–42 (GLSGSGKS) participates in ATP binding. Ser-109 acts as the Phosphoserine intermediate in catalysis.

The protein belongs to the APS kinase family.

The catalysed reaction is adenosine 5'-phosphosulfate + ATP = 3'-phosphoadenylyl sulfate + ADP + H(+). Its pathway is sulfur metabolism; hydrogen sulfide biosynthesis; sulfite from sulfate: step 2/3. Catalyzes the synthesis of activated sulfate. The polypeptide is Adenylyl-sulfate kinase (Salmonella typhi).